We begin with the raw amino-acid sequence, 641 residues long: Protein TIC 62, chloroplastic (641 aa).

Residues 1–63 (MEGTCFLRGQ…LSLRASGPIR (63 aa)) constitute a chloroplast transit peptide. Alanine 64 carries the post-translational modification N-acetylalanine. 84 to 113 (VFVAGATGKVGSRTVRELLKLGFRVRAGVR) provides a ligand contact to NADP(+). The tract at residues 328–641 (SKRPYVPPPK…SPLPSPVTNH (314 aa)) is disordered. Over residues 359-372 (APKEDEAPPKEKNV) the composition is skewed to basic and acidic residues. 2 repeat units span residues 376–397 (PLSP…PNST) and 444–465 (PLSP…PTAS). The tract at residues 376-638 (PLSPYASYED…PPTSPLPSPV (263 aa)) is 4 X 22 AA approximate repeats. Low complexity predominate over residues 393 to 402 (IPNSTTSVSP). Residues 435-444 (KQVEEKKERP) show a composition bias toward basic and acidic residues. Positions 485 to 528 (SSTVAKTVTETAVATSVTETSVATSVPETAVATSVTETAAPATS) are enriched in low complexity. The stretch at 532–553 (PLSPYAIYADLKPPTSPTPAST) is repeat 3. The segment covering 599-612 (AIDTSLASGDNTAQ) has biased composition (polar residues). Repeat 4 spans residues 617-638 (PLSPYTMYADMKPPTSPLPSPV). Residues 630-641 (PTSPLPSPVTNH) are compositionally biased toward pro residues.

As to quaternary structure, part of the Tic complex. Interacts with TIC110 and TIC55. Interacts with LFNR1 and LFNR2. Component of high molecular weight thylakoid LFNRs-containing protein complexes containing LIR1, LFNR1, LFNR2, TIC62 and TROL proteins. As to expression, expressed in cotyledons and leaves, but not in roots.

The protein resides in the plastid. It is found in the chloroplast inner membrane. The protein localises to the chloroplast stroma. Its subcellular location is the chloroplast thylakoid. Functionally, involved in protein precursor import into chloroplasts. Part of the redox regulon consisting of TIC32, TIC 55 and TIC62. Acts as a membrane anchor of LFNR1 and LFNR2. Has a NADPH-dependent dehydrogenase activity, but only after preincubation with lipids. This Arabidopsis thaliana (Mouse-ear cress) protein is Protein TIC 62, chloroplastic.